Here is a 212-residue protein sequence, read N- to C-terminus: Protein ERP5 (212 aa).

The first 20 residues, 1-20, serve as a signal peptide directing secretion; it reads MKYNIVHGICLLFAITQAVG. Over 21 to 178 the chain is Lumenal; that stretch reads AVHFYAKSGE…FRNQSESANS (158 aa). Positions 31–124 constitute a GOLD domain; it reads TKCFYEHLSR…TLRVFIELEI (94 aa). A glycan (N-linked (GlcNAc...) asparagine) is linked at N171. Residues 179 to 199 form a helical membrane-spanning segment; sequence KIMTWSVFQLLILLGTCAFQL. The Cytoplasmic portion of the chain corresponds to 200–212; sequence RYLKNFFVKQKVV.

The protein belongs to the EMP24/GP25L family.

The protein localises to the endoplasmic reticulum membrane. In terms of biological role, involved in vesicular protein trafficking. The sequence is that of Protein ERP5 (ERP5) from Saccharomyces cerevisiae (strain ATCC 204508 / S288c) (Baker's yeast).